We begin with the raw amino-acid sequence, 123 residues long: Phosphoribosyl-AMP cyclohydrolase (123 aa).

Asp76 is a Mg(2+) binding site. Cys77 is a Zn(2+) binding site. 2 residues coordinate Mg(2+): Asp78 and Asp80. Residues Cys93 and Cys100 each coordinate Zn(2+).

The protein belongs to the PRA-CH family. As to quaternary structure, homodimer. Requires Mg(2+) as cofactor. It depends on Zn(2+) as a cofactor.

It is found in the cytoplasm. It carries out the reaction 1-(5-phospho-beta-D-ribosyl)-5'-AMP + H2O = 1-(5-phospho-beta-D-ribosyl)-5-[(5-phospho-beta-D-ribosylamino)methylideneamino]imidazole-4-carboxamide. The protein operates within amino-acid biosynthesis; L-histidine biosynthesis; L-histidine from 5-phospho-alpha-D-ribose 1-diphosphate: step 3/9. Catalyzes the hydrolysis of the adenine ring of phosphoribosyl-AMP. In Methanocorpusculum labreanum (strain ATCC 43576 / DSM 4855 / Z), this protein is Phosphoribosyl-AMP cyclohydrolase.